Here is a 122-residue protein sequence, read N- to C-terminus: Ribonuclease P protein component (122 aa).

This sequence belongs to the RnpA family. Consists of a catalytic RNA component (M1 or rnpB) and a protein subunit.

It catalyses the reaction Endonucleolytic cleavage of RNA, removing 5'-extranucleotides from tRNA precursor.. RNaseP catalyzes the removal of the 5'-leader sequence from pre-tRNA to produce the mature 5'-terminus. It can also cleave other RNA substrates such as 4.5S RNA. The protein component plays an auxiliary but essential role in vivo by binding to the 5'-leader sequence and broadening the substrate specificity of the ribozyme. In Oenococcus oeni (strain ATCC BAA-331 / PSU-1), this protein is Ribonuclease P protein component.